The primary structure comprises 261 residues: Acetylglutamate kinase (261 aa).

Substrate is bound by residues 45-46, R67, and N162; that span reads GG.

It belongs to the acetylglutamate kinase family. ArgB subfamily.

The protein resides in the cytoplasm. The enzyme catalyses N-acetyl-L-glutamate + ATP = N-acetyl-L-glutamyl 5-phosphate + ADP. It functions in the pathway amino-acid biosynthesis; L-arginine biosynthesis; N(2)-acetyl-L-ornithine from L-glutamate: step 2/4. Its function is as follows. Catalyzes the ATP-dependent phosphorylation of N-acetyl-L-glutamate. This Bacteroides fragilis (strain ATCC 25285 / DSM 2151 / CCUG 4856 / JCM 11019 / LMG 10263 / NCTC 9343 / Onslow / VPI 2553 / EN-2) protein is Acetylglutamate kinase.